A 113-amino-acid polypeptide reads, in one-letter code: Pro-corazonin (113 aa).

Positions 1 to 19 (MATNITMFLIVITLTSVAA) are cleaved as a signal peptide. The residue at position 20 (Q20) is a Pyrrolidone carboxylic acid. An Asparagine amide modification is found at N30. A disordered region spans residues 74–96 (LGPCDTSKTRSTTNPSDTNTSAV). Over residues 82–96 (TRSTTNPSDTNTSAV) the composition is skewed to polar residues.

Belongs to the corazonin family. Four pairs of lateral neurosecretory cells in the brains of late instar larvae, pupae and adults.

Its subcellular location is the secreted. Cardioactive peptide. Corazonin is probably involved in the physiological regulation of the heart beat. The polypeptide is Pro-corazonin (Galleria mellonella (Greater wax moth)).